A 312-amino-acid polypeptide reads, in one-letter code: DNA-directed RNA polymerase subunit alpha (312 aa).

Residues 1-226 are alpha N-terminal domain (alpha-NTD); that stretch reads MIEFEKPRIE…EHLDIFVNLT (226 aa). An alpha C-terminal domain (alpha-CTD) region spans residues 243–312; that stretch reads KEKMLEMTIE…DLGLGLRKDD (70 aa).

Belongs to the RNA polymerase alpha chain family. As to quaternary structure, homodimer. The RNAP catalytic core consists of 2 alpha, 1 beta, 1 beta' and 1 omega subunit. When a sigma factor is associated with the core the holoenzyme is formed, which can initiate transcription.

It catalyses the reaction RNA(n) + a ribonucleoside 5'-triphosphate = RNA(n+1) + diphosphate. Functionally, DNA-dependent RNA polymerase catalyzes the transcription of DNA into RNA using the four ribonucleoside triphosphates as substrates. The polypeptide is DNA-directed RNA polymerase subunit alpha (Enterococcus faecalis (strain ATCC 700802 / V583)).